A 480-amino-acid polypeptide reads, in one-letter code: Siroheme synthase (480 aa).

The interval 1–203 (MNYFPIFANL…QQTAQAEQEL (203 aa)) is precorrin-2 dehydrogenase /sirohydrochlorin ferrochelatase. NAD(+) contacts are provided by residues 22–23 (SV) and 43–44 (NQ). At S128 the chain carries Phosphoserine. The interval 214–480 (GFVSLVGAGP…GGLNAGQRAA (267 aa)) is uroporphyrinogen-III C-methyltransferase. P223 is an S-adenosyl-L-methionine binding site. Residue D246 is the Proton acceptor of the active site. The active-site Proton donor is the K268. S-adenosyl-L-methionine contacts are provided by residues 299-301 (GGD), V304, 329-330 (TA), M381, and G410.

It in the N-terminal section; belongs to the precorrin-2 dehydrogenase / sirohydrochlorin ferrochelatase family. This sequence in the C-terminal section; belongs to the precorrin methyltransferase family.

It carries out the reaction uroporphyrinogen III + 2 S-adenosyl-L-methionine = precorrin-2 + 2 S-adenosyl-L-homocysteine + H(+). The catalysed reaction is precorrin-2 + NAD(+) = sirohydrochlorin + NADH + 2 H(+). The enzyme catalyses siroheme + 2 H(+) = sirohydrochlorin + Fe(2+). It participates in cofactor biosynthesis; adenosylcobalamin biosynthesis; precorrin-2 from uroporphyrinogen III: step 1/1. It functions in the pathway cofactor biosynthesis; adenosylcobalamin biosynthesis; sirohydrochlorin from precorrin-2: step 1/1. Its pathway is porphyrin-containing compound metabolism; siroheme biosynthesis; precorrin-2 from uroporphyrinogen III: step 1/1. The protein operates within porphyrin-containing compound metabolism; siroheme biosynthesis; siroheme from sirohydrochlorin: step 1/1. It participates in porphyrin-containing compound metabolism; siroheme biosynthesis; sirohydrochlorin from precorrin-2: step 1/1. Functionally, multifunctional enzyme that catalyzes the SAM-dependent methylations of uroporphyrinogen III at position C-2 and C-7 to form precorrin-2 via precorrin-1. Then it catalyzes the NAD-dependent ring dehydrogenation of precorrin-2 to yield sirohydrochlorin. Finally, it catalyzes the ferrochelation of sirohydrochlorin to yield siroheme. This chain is Siroheme synthase, found in Neisseria meningitidis serogroup C (strain 053442).